Consider the following 230-residue polypeptide: 3,4-dihydroxy-2-butanone 4-phosphate synthase (230 aa).

D-ribulose 5-phosphate is bound by residues 42 to 43 (RE), Asp-47, 155 to 159 (RRGHT), and Glu-179. A Mg(2+)-binding site is contributed by Glu-43. His-158 serves as a coordination point for Mg(2+).

The protein belongs to the DHBP synthase family. Homodimer. Mg(2+) serves as cofactor. Mn(2+) is required as a cofactor.

It catalyses the reaction D-ribulose 5-phosphate = (2S)-2-hydroxy-3-oxobutyl phosphate + formate + H(+). It functions in the pathway cofactor biosynthesis; riboflavin biosynthesis; 2-hydroxy-3-oxobutyl phosphate from D-ribulose 5-phosphate: step 1/1. Functionally, catalyzes the conversion of D-ribulose 5-phosphate to formate and 3,4-dihydroxy-2-butanone 4-phosphate. This chain is 3,4-dihydroxy-2-butanone 4-phosphate synthase, found in Bordetella pertussis (strain Tohama I / ATCC BAA-589 / NCTC 13251).